The primary structure comprises 470 residues: Sorting nexin-17 (470 aa).

The PX domain maps to 1–109 (MHFSIPETES…SFLRRAQQET (109 aa)). A 1,2-diacyl-sn-glycero-3-phospho-(1D-myo-inositol-3-phosphate) is bound by residues R36, S38, K62, and R75. The Ras-associating domain occupies 115 to 206 (EEVSLEVLLS…YKIVLRKSYW (92 aa)). An FERM-like region spans residues 115–432 (EEVSLEVLLS…DASRESMVKL (318 aa)). The interval 270-432 (GYLRFDACVA…DASRESMVKL (163 aa)) is PTB-like F3 module. Phosphoserine is present on residues S336, S407, S409, S415, S421, S437, and S440. Residues 400–426 (VGGTLRRSDSQQAVKSPPLLESPDASR) form a disordered region.

Belongs to the sorting nexin family. Monomer. Interacts with APP (via cytoplasmic YXNPXY motif). Interacts with KIF1B. Interacts with the C-termini of P-selectin, PTC, LDLR, VLDLR, LRP1 and LRP8. Interacts with KRIT1 (via N-terminus). Interacts with HRAS. Interacts with ITGB1 and ITGB5 (via NPxY motif). Interacts with CCDC22 and CCDC93; the interaction associates SNX17 with the CCC complex. Interacts (via C-terminus) with VPS26C and VPS35L; the interactions are direct and associate SNX17 with the retriever complex.

It is found in the cytoplasm. The protein localises to the early endosome. The protein resides in the cytoplasmic vesicle membrane. Its function is as follows. Critical regulator of endosomal recycling of numerous surface proteins, including integrins, signaling receptor and channels. Binds to NPxY sequences in the cytoplasmic tails of target cargos. Associates with retriever and CCC complexes to prevent lysosomal degradation and promote cell surface recycling of numerous cargos such as integrins ITGB1, ITGB5 and their associated alpha subunits. Also required for maintenance of normal cell surface levels of APP and LRP1. Interacts with membranes containing phosphatidylinositol 3-phosphate (PtdIns(3P)). This is Sorting nexin-17 (SNX17) from Bos taurus (Bovine).